Consider the following 77-residue polypeptide: U8-lycotoxin-Ls1g (77 aa).

Positions 1–20 are cleaved as a signal peptide; it reads MKLIIFTGLVLFAIVSLIEV. A propeptide spanning residues 21–26 is cleaved from the precursor; that stretch reads QADNER.

This sequence belongs to the neurotoxin 19 (CSTX) family. 08 (U8-Lctx) subfamily. In terms of processing, contains 4 disulfide bonds. As to expression, expressed by the venom gland.

The protein resides in the secreted. The sequence is that of U8-lycotoxin-Ls1g from Lycosa singoriensis (Wolf spider).